Consider the following 276-residue polypeptide: Flagellin FljJ (276 aa).

The segment at 51–80 (RPGAGDMSGLAREDEPGSGDIDRGRGPRAG) is disordered. The span at 61–75 (AREDEPGSGDIDRGR) shows a compositional bias: basic and acidic residues.

Belongs to the bacterial flagellin family. In terms of assembly, in C.crescentus, the flagellar filament is composed of multiple flagellins of 29 kDa; 27 kDa and 25 kDa.

It is found in the secreted. Its subcellular location is the bacterial flagellum. Flagellin is the subunit protein which polymerizes to form the filaments of bacterial flagella. The polypeptide is Flagellin FljJ (fljJ) (Caulobacter vibrioides (strain ATCC 19089 / CIP 103742 / CB 15) (Caulobacter crescentus)).